We begin with the raw amino-acid sequence, 270 residues long: Aliphatic sulfonates import ATP-binding protein SsuB (270 aa).

Residues 17-238 (LASKGLRKTF…ARGSHRLAAL (222 aa)) form the ABC transporter domain. 49 to 56 (GRSGCGKS) serves as a coordination point for ATP. The interval 248–270 (STPGTAPEPDPVAPLPTQLRWAH) is disordered.

The protein belongs to the ABC transporter superfamily. Aliphatic sulfonates importer (TC 3.A.1.17.2) family. In terms of assembly, the complex is composed of two ATP-binding proteins (SsuB), two transmembrane proteins (SsuC) and a solute-binding protein (SsuA).

It is found in the cell inner membrane. It catalyses the reaction ATP + H2O + aliphatic sulfonate-[sulfonate-binding protein]Side 1 = ADP + phosphate + aliphatic sulfonateSide 2 + [sulfonate-binding protein]Side 1.. Part of the ABC transporter complex SsuABC involved in aliphatic sulfonates import. Responsible for energy coupling to the transport system. The polypeptide is Aliphatic sulfonates import ATP-binding protein SsuB (Pseudomonas putida (strain ATCC 47054 / DSM 6125 / CFBP 8728 / NCIMB 11950 / KT2440)).